The primary structure comprises 418 residues: Tryptophan synthase beta chain (418 aa).

The span at 1–18 shows a compositional bias: polar residues; the sequence is MTSTLPKASQPDPSSLQP. Residues 1-28 form a disordered region; the sequence is MTSTLPKASQPDPSSLQPSARPGAHGRF. Position 111 is an N6-(pyridoxal phosphate)lysine (Lys111).

It belongs to the TrpB family. As to quaternary structure, tetramer of two alpha and two beta chains. Requires pyridoxal 5'-phosphate as cofactor.

The enzyme catalyses (1S,2R)-1-C-(indol-3-yl)glycerol 3-phosphate + L-serine = D-glyceraldehyde 3-phosphate + L-tryptophan + H2O. It functions in the pathway amino-acid biosynthesis; L-tryptophan biosynthesis; L-tryptophan from chorismate: step 5/5. In terms of biological role, the beta subunit is responsible for the synthesis of L-tryptophan from indole and L-serine. The sequence is that of Tryptophan synthase beta chain from Synechococcus sp. (strain CC9902).